A 524-amino-acid polypeptide reads, in one-letter code: MSDILPLDVIGRRVEVNGEYATVRFCGAVPPVAGLWLGVEWDNPERGKHDGSHEGTMYFKCRHPTGGSFVRPNIVNFGEDFLTALKKRYVLTDGPDDDEKSCSLKVGSKQVQTIGFEHITKKQSQLRSLQDISLWKCAVSCAGERGRIAEACPNIRVVDLSKNLLSTWDEVILIAEQLKDLEALDLSENKLQFPSDSPTLTRTFSTLKTLVLNKTGITWTEVLHCAPSWPVLQELYLKSNGISISERPVNALQNLRLLDLSSNPSIDESQLCLIAYLPRLEHLLLSDIGLSSIHFPDAEIGCKTSMFPALTYLIVNDNQISEWSFINELDKLQSLQALSCARNPLTKGDKAEEIIIAKIGQLKTLNRCQILPEERRGAELDYRKAFGKEWRKAGGHPDPDRNRPSAEFLSAHPRYQLLCCKYGAPEDEELKTQQPFMLKNQLLTLKIKCSNQPEQQILEKQLPDSMTIQKVKGLLSRLLKVPVSELLLSYESSKMPGREIELENDLQPLQFYSVENGDCLLVRW.

Position 2 is an N-acetylserine (serine 2). In terms of domain architecture, CAP-Gly spans 27 to 71; that stretch reads GAVPPVAGLWLGVEWDNPERGKHDGSHEGTMYFKCRHPTGGSFVR. LRR repeat units lie at residues 154–175, 180–201, 206–227, 231–253, 254–273, 279–300, and 309–330; these read NIRVVDLSKNLLSTWDEVILIA, DLEALDLSENKLQFPSDSPTLT, TLKTLVLNKTGITWTEVLHCAP, VLQELYLKSNGISISERPVNALQ, NLRLLDLSSNPSIDESQLCL, RLEHLLLSDIGLSSIHFPDAEI, and ALTYLIVNDNQISEWSFINELD. The 39-residue stretch at 343–381 folds into the LRRCT domain; it reads NPLTKGDKAEEIIIAKIGQLKTLNRCQILPEERRGAELD. Lysine 460 carries the N6-acetyllysine modification. The residue at position 492 (serine 492) is a Phosphoserine.

Belongs to the TBCE family. In terms of assembly, supercomplex made of cofactors A to E. Cofactors A and D function by capturing and stabilizing tubulin in a quasi-native conformation. Cofactor E binds to the cofactor D-tubulin complex; interaction with cofactor C then causes the release of tubulin polypeptides that are committed to the native state. Cofactors B and E can form a heterodimer which binds to alpha-tubulin and enhances their ability to dissociate tubulin heterodimers. Interacts with TBCD.

The protein resides in the cytoplasm. It localises to the cytoskeleton. Its function is as follows. Tubulin-folding protein; involved in the second step of the tubulin folding pathway and in the regulation of tubulin heterodimer dissociation. Required for correct organization of microtubule cytoskeleton and mitotic splindle, and maintenance of the neuronal microtubule network. The protein is Tubulin-specific chaperone E (Tbce) of Rattus norvegicus (Rat).